A 202-amino-acid polypeptide reads, in one-letter code: Dual-action ribosomal maturation protein DarP (202 aa).

Residues Met-1–Asn-13 are compositionally biased toward low complexity. Residues Met-1 to Met-39 form a disordered region.

It belongs to the DarP family.

The protein localises to the cytoplasm. In terms of biological role, member of a network of 50S ribosomal subunit biogenesis factors which assembles along the 30S-50S interface, preventing incorrect 23S rRNA structures from forming. Promotes peptidyl transferase center (PTC) maturation. The protein is Dual-action ribosomal maturation protein DarP of Cupriavidus metallidurans (strain ATCC 43123 / DSM 2839 / NBRC 102507 / CH34) (Ralstonia metallidurans).